Consider the following 218-residue polypeptide: Histone chaperone ASF1B (218 aa).

The protein belongs to the ASF1 family. In terms of assembly, interacts with histone H3 and histone H4. Interacts strongly with the N-terminus of TOUSLED. In terms of processing, phosphorylated in vitro by TOUSLED.

The protein resides in the nucleus. Functionally, histone chaperone that facilitates histone deposition and histone exchange and removal during nucleosome assembly and disassembly. This chain is Histone chaperone ASF1B (ASF1B), found in Arabidopsis thaliana (Mouse-ear cress).